A 359-amino-acid chain; its full sequence is 4-hydroxy-2-oxovalerate aldolase 1 (359 aa).

In terms of domain architecture, Pyruvate carboxyltransferase spans 23–275 (VRVTDTSLRD…KTGIDFFDIA (253 aa)). 31 to 32 (RD) provides a ligand contact to substrate. Asp-32 serves as a coordination point for Mn(2+). Residue His-35 is the Proton acceptor of the active site. Residues Ser-185 and His-214 each coordinate substrate. Positions 214 and 216 each coordinate Mn(2+). Position 305 (Tyr-305) interacts with substrate.

It belongs to the 4-hydroxy-2-oxovalerate aldolase family.

The catalysed reaction is (S)-4-hydroxy-2-oxopentanoate = acetaldehyde + pyruvate. The protein is 4-hydroxy-2-oxovalerate aldolase 1 of Mycobacteroides abscessus (strain ATCC 19977 / DSM 44196 / CCUG 20993 / CIP 104536 / JCM 13569 / NCTC 13031 / TMC 1543 / L948) (Mycobacterium abscessus).